Consider the following 303-residue polypeptide: Tumor necrosis factor receptor type 1-associated DEATH domain protein (303 aa).

A Nuclear export signal motif is present at residues 141-157; sequence QKDDELAEIDERLKSIK. A Death domain is found at 208-298; sequence TSAHIQHFAK…SIALDLLSLN (91 aa). Residues 224 to 237 carry the Nuclear localization signal motif; sequence KPVGRSLGKTCRAL.

As to quaternary structure, heterodimer with tnfrsf1a.

Its subcellular location is the nucleus. It localises to the cytoplasm. The protein localises to the cytoskeleton. Its function is as follows. Adapter molecule for tnfrsf1a that specifically associates with the cytoplasmic domain of activated tnfrsf1a mediating its interaction with fadd. This chain is Tumor necrosis factor receptor type 1-associated DEATH domain protein, found in Xenopus laevis (African clawed frog).